Reading from the N-terminus, the 392-residue chain is Flavohemoprotein (392 aa).

The region spanning 1-139 is the Globin domain; the sequence is MLNAEQRAII…LADILIGAEE (139 aa). His85 is a heme b binding site. Active-site charge relay system residues include Tyr95 and Glu138. The interval 150–392 is reductase; sequence GGWRGTREFR…EFFGPAAALE (243 aa). One can recognise an FAD-binding FR-type domain in the interval 153-256; that stretch reads RGTREFRLVR…FPPAGDFTLA (104 aa). FAD contacts are provided by residues Tyr191 and 205 to 208; that span reads RNYS. Residue 268-273 coordinates NADP(+); sequence GVGITP. Residue 384 to 387 participates in FAD binding; that stretch reads FFGP.

It belongs to the globin family. Two-domain flavohemoproteins subfamily. This sequence in the C-terminal section; belongs to the flavoprotein pyridine nucleotide cytochrome reductase family. Requires heme b as cofactor. FAD is required as a cofactor.

The catalysed reaction is 2 nitric oxide + NADPH + 2 O2 = 2 nitrate + NADP(+) + H(+). It catalyses the reaction 2 nitric oxide + NADH + 2 O2 = 2 nitrate + NAD(+) + H(+). Is involved in NO detoxification in an aerobic process, termed nitric oxide dioxygenase (NOD) reaction that utilizes O(2) and NAD(P)H to convert NO to nitrate, which protects the bacterium from various noxious nitrogen compounds. Therefore, plays a central role in the inducible response to nitrosative stress. In Pseudomonas putida (strain ATCC 47054 / DSM 6125 / CFBP 8728 / NCIMB 11950 / KT2440), this protein is Flavohemoprotein.